Reading from the N-terminus, the 249-residue chain is Sugar fermentation stimulation protein homolog (249 aa).

It belongs to the SfsA family.

The polypeptide is Sugar fermentation stimulation protein homolog (Synechococcus sp. (strain CC9902)).